The chain runs to 254 residues: MTAAFTVVIPARYGSSRFPGKPLKTIAGKPMVQLVWEQACKSSAERVVIATDDARIVEACQAFGAEVLLTRDDHNSGTDRLAEVAAQLGLAADAIVVNVQGDEPMIPPAVIDQVASNLAAHPEAGMSTLAEPIDDVAALFNPNIVKVATDINGLALTFSRAPLPWARDALAANRDQLPAGVPYRRHIGIYAYRAGFLHDFVSWGPCWLENTESLEQLRALWNGVRIHVADALEAPPGGVDTPEDLERVRRLLEG.

It belongs to the KdsB family.

The protein resides in the cytoplasm. It carries out the reaction 3-deoxy-alpha-D-manno-oct-2-ulosonate + CTP = CMP-3-deoxy-beta-D-manno-octulosonate + diphosphate. The protein operates within nucleotide-sugar biosynthesis; CMP-3-deoxy-D-manno-octulosonate biosynthesis; CMP-3-deoxy-D-manno-octulosonate from 3-deoxy-D-manno-octulosonate and CTP: step 1/1. It participates in bacterial outer membrane biogenesis; lipopolysaccharide biosynthesis. Its function is as follows. Activates KDO (a required 8-carbon sugar) for incorporation into bacterial lipopolysaccharide in Gram-negative bacteria. The protein is 3-deoxy-manno-octulosonate cytidylyltransferase of Pseudomonas syringae pv. syringae (strain B728a).